The sequence spans 634 residues: Glutamyl-tRNA(Gln) amidotransferase subunit E (634 aa).

This sequence belongs to the GatB/GatE family. GatE subfamily. Heterodimer of GatD and GatE.

The catalysed reaction is L-glutamyl-tRNA(Gln) + L-glutamine + ATP + H2O = L-glutaminyl-tRNA(Gln) + L-glutamate + ADP + phosphate + H(+). Its function is as follows. Allows the formation of correctly charged Gln-tRNA(Gln) through the transamidation of misacylated Glu-tRNA(Gln) in organisms which lack glutaminyl-tRNA synthetase. The reaction takes place in the presence of glutamine and ATP through an activated gamma-phospho-Glu-tRNA(Gln). The GatDE system is specific for glutamate and does not act on aspartate. The protein is Glutamyl-tRNA(Gln) amidotransferase subunit E of Sulfolobus acidocaldarius (strain ATCC 33909 / DSM 639 / JCM 8929 / NBRC 15157 / NCIMB 11770).